A 181-amino-acid chain; its full sequence is Dual-action ribosomal maturation protein DarP (181 aa).

The tract at residues 1–24 (MTGIKRPMSQYQDDNEWEDWGPSK) is disordered.

It belongs to the DarP family.

It localises to the cytoplasm. In terms of biological role, member of a network of 50S ribosomal subunit biogenesis factors which assembles along the 30S-50S interface, preventing incorrect 23S rRNA structures from forming. Promotes peptidyl transferase center (PTC) maturation. This is Dual-action ribosomal maturation protein DarP from Aeromonas hydrophila subsp. hydrophila (strain ATCC 7966 / DSM 30187 / BCRC 13018 / CCUG 14551 / JCM 1027 / KCTC 2358 / NCIMB 9240 / NCTC 8049).